The primary structure comprises 645 residues: Phosphomethylpyrimidine synthase (645 aa).

Positions 1–12 are enriched in polar residues; the sequence is MSHNTVIPTTDI. A disordered region spans residues 1–25; sequence MSHNTVIPTTDISPKPDPARPRKAQ. Substrate-binding positions include N253, M282, Y311, H347, 367–369, 408–411, and E447; these read SRG and DGLR. Residue H451 coordinates Zn(2+). Y474 is a binding site for substrate. Residue H515 participates in Zn(2+) binding. [4Fe-4S] cluster contacts are provided by C595, C598, and C603.

Belongs to the ThiC family. In terms of assembly, homodimer. [4Fe-4S] cluster serves as cofactor.

It carries out the reaction 5-amino-1-(5-phospho-beta-D-ribosyl)imidazole + S-adenosyl-L-methionine = 4-amino-2-methyl-5-(phosphooxymethyl)pyrimidine + CO + 5'-deoxyadenosine + formate + L-methionine + 3 H(+). Its pathway is cofactor biosynthesis; thiamine diphosphate biosynthesis. Catalyzes the synthesis of the hydroxymethylpyrimidine phosphate (HMP-P) moiety of thiamine from aminoimidazole ribotide (AIR) in a radical S-adenosyl-L-methionine (SAM)-dependent reaction. This chain is Phosphomethylpyrimidine synthase, found in Photorhabdus laumondii subsp. laumondii (strain DSM 15139 / CIP 105565 / TT01) (Photorhabdus luminescens subsp. laumondii).